Consider the following 476-residue polypeptide: Protein transport protein Sec61 subunit alpha-like 1 (476 aa).

The Cytoplasmic portion of the chain corresponds to 2–33 (AIKFLEVIKPFCAVLPEIQKPERKIQFREKVL). Residues 34 to 53 (WTAITLFIFLVCCQIPLFGI) traverse the membrane as a helical segment. The Lumenal segment spans residues 54–76 (MSSDSADPFYWMRVILASNRGTL). A helical membrane pass occupies residues 77–96 (MELGISPIVTSGLIMQLLAG). The Cytoplasmic segment spans residues 97–117 (AKIIEVGDTPKDRALFNGAQK). Residues 118–138 (LFGMIITIGQAIVYVMTGMYG) form a helical membrane-spanning segment. Residues 139–144 (DPSEMG) are Lumenal-facing. Residues 145–165 (AGICLLIIIQLFVAGLIVLLL) form a helical membrane-spanning segment. Over 166 to 172 (DELLQKG) the chain is Cytoplasmic. Residues 173 to 193 (YGLGSGISLFIATNICETIVW) traverse the membrane as a helical segment. Residues 194-240 (KAFSPTTVNTGRGTEFEGAIIALFHLLATRTDKVRALREAFYRQNLP) lie on the Lumenal side of the membrane. Residues 241–261 (NLMNLIATVFVFAVVIYFQGF) form a helical membrane-spanning segment. The Cytoplasmic portion of the chain corresponds to 262-288 (RVDLPIKSARYRGQYNTYPIKLFYTSN). The chain crosses the membrane as a helical span at residues 289-309 (IPIILQSALVSNLYVISQMLS). At 310 to 354 (TRFSGNFLVNLLGTWSDTSSGGPARAYPVGGLCYYLSPPESFGSV) the chain is on the lumenal side. Residues 355 to 375 (LDDPVHAVIYIVFMLGSCAFF) form a helical membrane-spanning segment. At 376–420 (SKTWIEVSGSSAKDVAKQLKEQQMVMRGHRETSMVHELNRYIPTA) the chain is on the cytoplasmic side. Residues 421-441 (AAFGGLCIGGLSVMADFLGAI) form a helical membrane-spanning segment. Residues 442-445 (GSGT) lie on the Lumenal side of the membrane. The helical transmembrane segment at 446–462 (GILLAVTIIYQYFEIFV) threads the bilayer. Topologically, residues 463–476 (KEQSEVGSMGALLF) are cytoplasmic.

It belongs to the SecY/SEC61-alpha family. In terms of assembly, the SEC61 channel-forming translocon complex consists of channel-forming core components SEC61A1, SEC61B and SEC61G and different auxiliary components such as SEC62 and SEC63. The SEC61 channel associates with the multi-pass translocon (MPT) complex.

The protein resides in the endoplasmic reticulum membrane. Its function is as follows. Component of SEC61 channel-forming translocon complex that mediates transport of signal peptide-containing precursor polypeptides across the endoplasmic reticulum (ER). Forms a ribosome receptor and a gated pore in the ER membrane, both functions required for cotranslational translocation of nascent polypeptides. May cooperate with auxiliary protein SEC62, SEC63 and HSPA5/BiP to enable post-translational transport of small presecretory proteins. The SEC61 channel is also involved in ER membrane insertion of transmembrane proteins: it mediates membrane insertion of the first few transmembrane segments of proteins, while insertion of subsequent transmembrane regions of multi-pass membrane proteins is mediated by the multi-pass translocon (MPT) complex. Plays a role in the pronephric kidney tubule development. This is Protein transport protein Sec61 subunit alpha-like 1 (sec61al1) from Danio rerio (Zebrafish).